The sequence spans 764 residues: 5-methyltetrahydropteroyltriglutamate--homocysteine methyltransferase (764 aa).

Residues 16 to 19 (RELK) and lysine 121 contribute to the 5-methyltetrahydropteroyltri-L-glutamate site. Residues 440-442 (IGS) and glutamate 493 each bind L-homocysteine. Residues 440 to 442 (IGS) and glutamate 493 each bind L-methionine. Residues 524-525 (RC) and tryptophan 570 each bind 5-methyltetrahydropteroyltri-L-glutamate. Residue aspartate 608 participates in L-homocysteine binding. Aspartate 608 serves as a coordination point for L-methionine. Glutamate 614 contributes to the 5-methyltetrahydropteroyltri-L-glutamate binding site. 3 residues coordinate Zn(2+): histidine 650, cysteine 652, and glutamate 674. The Proton donor role is filled by histidine 703. Cysteine 735 serves as a coordination point for Zn(2+).

It belongs to the vitamin-B12 independent methionine synthase family. It depends on Zn(2+) as a cofactor.

It catalyses the reaction 5-methyltetrahydropteroyltri-L-glutamate + L-homocysteine = tetrahydropteroyltri-L-glutamate + L-methionine. Its pathway is amino-acid biosynthesis; L-methionine biosynthesis via de novo pathway; L-methionine from L-homocysteine (MetE route): step 1/1. Functionally, catalyzes the transfer of a methyl group from 5-methyltetrahydrofolate to homocysteine resulting in methionine formation. The polypeptide is 5-methyltetrahydropteroyltriglutamate--homocysteine methyltransferase (Burkholderia ambifaria (strain MC40-6)).